The primary structure comprises 390 residues: Period circadian protein (390 aa).

Disordered stretches follow at residues 27-120 (VTAP…APPV), 164-188 (LEYS…WEGE), 247-266 (GGNG…STNQ), and 327-356 (SPSG…TSQA). Over residues 93–114 (GTSGTGNSGDGGGGGGADGTGS) the composition is skewed to gly residues. Over residues 247 to 256 (GGNGNVGSGN) the composition is skewed to gly residues.

Forms a heterodimer with timeless (TIM); the complex then translocates into the nucleus. In terms of processing, phosphorylated with a circadian rhythmicity, probably by the double-time protein (dbt). Phosphorylation could be implicated in the stability of per monomer and in the formation of heterodimer per-tim.

The protein resides in the nucleus. It is found in the cytoplasm. Its subcellular location is the perinuclear region. Functionally, essential for biological clock functions. Determines the period length of circadian and ultradian rhythms; an increase in PER dosage leads to shortened circadian rhythms and a decrease leads to lengthened circadian rhythms. Essential for the circadian rhythmicity of locomotor activity, eclosion behavior, and for the rhythmic component of the male courtship song that originates in the thoracic nervous system. The biological cycle depends on the rhythmic formation and nuclear localization of the TIM-PER complex. Light induces the degradation of TIM, which promotes elimination of PER. Nuclear activity of the heterodimer coordinatively regulates PER and TIM transcription through a negative feedback loop. Behaves as a negative element in circadian transcriptional loop. Does not appear to bind DNA, suggesting indirect transcriptional inhibition. The sequence is that of Period circadian protein (per) from Drosophila tropicalis (Fruit fly).